A 223-amino-acid chain; its full sequence is Phosphoribosylformylglycinamidine synthase subunit PurQ (223 aa).

Positions 4-223 (FAVIVFPGTN…FKSIVEWMKK (220 aa)) constitute a Glutamine amidotransferase type-1 domain. C85 serves as the catalytic Nucleophile. Active-site residues include H196 and E198.

Part of the FGAM synthase complex composed of 1 PurL, 1 PurQ and 2 PurS subunits.

Its subcellular location is the cytoplasm. The catalysed reaction is N(2)-formyl-N(1)-(5-phospho-beta-D-ribosyl)glycinamide + L-glutamine + ATP + H2O = 2-formamido-N(1)-(5-O-phospho-beta-D-ribosyl)acetamidine + L-glutamate + ADP + phosphate + H(+). The enzyme catalyses L-glutamine + H2O = L-glutamate + NH4(+). Its pathway is purine metabolism; IMP biosynthesis via de novo pathway; 5-amino-1-(5-phospho-D-ribosyl)imidazole from N(2)-formyl-N(1)-(5-phospho-D-ribosyl)glycinamide: step 1/2. Part of the phosphoribosylformylglycinamidine synthase complex involved in the purines biosynthetic pathway. Catalyzes the ATP-dependent conversion of formylglycinamide ribonucleotide (FGAR) and glutamine to yield formylglycinamidine ribonucleotide (FGAM) and glutamate. The FGAM synthase complex is composed of three subunits. PurQ produces an ammonia molecule by converting glutamine to glutamate. PurL transfers the ammonia molecule to FGAR to form FGAM in an ATP-dependent manner. PurS interacts with PurQ and PurL and is thought to assist in the transfer of the ammonia molecule from PurQ to PurL. This is Phosphoribosylformylglycinamidine synthase subunit PurQ from Pyrococcus horikoshii (strain ATCC 700860 / DSM 12428 / JCM 9974 / NBRC 100139 / OT-3).